A 217-amino-acid chain; its full sequence is Adenosylcobinamide-GDP ribazoletransferase (217 aa).

Transmembrane regions (helical) follow at residues 6-26 (ALLS…FKCA), 39-61 (GPAA…LLLM), 95-115 (GTGG…STAS), 116-136 (PLQL…VAAF), and 162-182 (ALAV…AVAL).

The protein belongs to the CobS family. The cofactor is Mg(2+).

It localises to the cell membrane. It catalyses the reaction alpha-ribazole + adenosylcob(III)inamide-GDP = adenosylcob(III)alamin + GMP + H(+). The catalysed reaction is alpha-ribazole 5'-phosphate + adenosylcob(III)inamide-GDP = adenosylcob(III)alamin 5'-phosphate + GMP + H(+). It functions in the pathway cofactor biosynthesis; adenosylcobalamin biosynthesis; adenosylcobalamin from cob(II)yrinate a,c-diamide: step 7/7. Joins adenosylcobinamide-GDP and alpha-ribazole to generate adenosylcobalamin (Ado-cobalamin). Also synthesizes adenosylcobalamin 5'-phosphate from adenosylcobinamide-GDP and alpha-ribazole 5'-phosphate. The polypeptide is Adenosylcobinamide-GDP ribazoletransferase (Pyrobaculum calidifontis (strain DSM 21063 / JCM 11548 / VA1)).